Consider the following 595-residue polypeptide: Pectinesterase 5 (595 aa).

Positions 1 to 24 are cleaved as a signal peptide; sequence MIGKVVVSVASILLIVGVAIGVVA. 2 N-linked (GlcNAc...) asparagine glycosylation sites follow: Asn86 and Asn206. The segment at 215–239 is disordered; it reads SDKGAAPVNKGTPPVADDSPVADPD. Positions 227–239 are enriched in low complexity; that stretch reads PPVADDSPVADPD. An RRLL cleavage motif motif is present at residues 243-246; it reads RRLL. The short motif at 263–266 is the RKLM cleavage motif element; sequence RKLM. A glycan (N-linked (GlcNAc...) asparagine) is linked at Asn349. Positions 360 and 390 each coordinate substrate. The active-site Proton donor is the Asp413. Asp434 functions as the Nucleophile in the catalytic mechanism. Positions 503 and 505 each coordinate substrate.

In the N-terminal section; belongs to the PMEI family. It in the C-terminal section; belongs to the pectinesterase family. As to quaternary structure, interacts with SBT6.1. In terms of tissue distribution, expressed in pollen grains and pollen tubes.

The protein resides in the cell membrane. It is found in the secreted. The protein localises to the cell wall. It localises to the golgi apparatus membrane. The enzyme catalyses [(1-&gt;4)-alpha-D-galacturonosyl methyl ester](n) + n H2O = [(1-&gt;4)-alpha-D-galacturonosyl](n) + n methanol + n H(+). It functions in the pathway glycan metabolism; pectin degradation; 2-dehydro-3-deoxy-D-gluconate from pectin: step 1/5. Its function is as follows. Acts in the modification of cell walls via demethylesterification of cell wall pectin. Plays an important role in growth of pollen tubes in female floral tissues, possibly via enhancing the interaction between the pollen tube and female floral tissues by modification of the cell walls. May be regulated by MYB80 during anther development and play a role in tapetum and pollen development. This is Pectinesterase 5 (PME5) from Arabidopsis thaliana (Mouse-ear cress).